The sequence spans 48 residues: DNA gyrase inhibitor YacG (48 aa).

4 residues coordinate Zn(2+): Cys9, Cys12, Cys28, and Cys32.

Belongs to the DNA gyrase inhibitor YacG family. In terms of assembly, interacts with GyrB. Requires Zn(2+) as cofactor.

Its function is as follows. Inhibits all the catalytic activities of DNA gyrase by preventing its interaction with DNA. Acts by binding directly to the C-terminal domain of GyrB, which probably disrupts DNA binding by the gyrase. The chain is DNA gyrase inhibitor YacG from Wigglesworthia glossinidia brevipalpis.